Reading from the N-terminus, the 99-residue chain is MQARDVILRPIITESSMAGADRKVYQFEVNRKATKTDVKVAVADVFGVTVKKVNIANVRGKNKRMGRYQGLTRNRKKATVSLTADSKDIEVFKNQEENK.

The protein belongs to the universal ribosomal protein uL23 family. As to quaternary structure, part of the 50S ribosomal subunit. Contacts protein L29, and trigger factor when it is bound to the ribosome.

Functionally, one of the early assembly proteins it binds 23S rRNA. One of the proteins that surrounds the polypeptide exit tunnel on the outside of the ribosome. Forms the main docking site for trigger factor binding to the ribosome. In Oenococcus oeni (strain ATCC BAA-331 / PSU-1), this protein is Large ribosomal subunit protein uL23.